The chain runs to 74 residues: Translation initiation factor IF-1 (74 aa).

One can recognise an S1-like domain in the interval 1–72 (MAKETEMEFE…TRGRITYRKI (72 aa)).

Belongs to the IF-1 family. Component of the 30S ribosomal translation pre-initiation complex which assembles on the 30S ribosome in the order IF-2 and IF-3, IF-1 and N-formylmethionyl-tRNA(fMet); mRNA recruitment can occur at any time during PIC assembly.

The protein resides in the cytoplasm. Its function is as follows. One of the essential components for the initiation of protein synthesis. Stabilizes the binding of IF-2 and IF-3 on the 30S subunit to which N-formylmethionyl-tRNA(fMet) subsequently binds. Helps modulate mRNA selection, yielding the 30S pre-initiation complex (PIC). Upon addition of the 50S ribosomal subunit IF-1, IF-2 and IF-3 are released leaving the mature 70S translation initiation complex. The protein is Translation initiation factor IF-1 of Mycoplasma capricolum subsp. capricolum (strain California kid / ATCC 27343 / NCTC 10154).